A 228-amino-acid polypeptide reads, in one-letter code: tRNA (guanine-N(1)-)-methyltransferase (228 aa).

S-adenosyl-L-methionine contacts are provided by residues Gly-108 and 127–132 (VGDFIL).

The protein belongs to the RNA methyltransferase TrmD family. As to quaternary structure, homodimer.

Its subcellular location is the cytoplasm. It catalyses the reaction guanosine(37) in tRNA + S-adenosyl-L-methionine = N(1)-methylguanosine(37) in tRNA + S-adenosyl-L-homocysteine + H(+). Functionally, specifically methylates guanosine-37 in various tRNAs. The sequence is that of tRNA (guanine-N(1)-)-methyltransferase from Metamycoplasma arthritidis (strain 158L3-1) (Mycoplasma arthritidis).